A 215-amino-acid chain; its full sequence is Phosphatidylserine decarboxylase proenzyme (215 aa).

S186 acts as the Schiff-base intermediate with substrate; via pyruvic acid in catalysis. S186 carries the post-translational modification Pyruvic acid (Ser); by autocatalysis.

The protein belongs to the phosphatidylserine decarboxylase family. PSD-A subfamily. Heterodimer of a large membrane-associated beta subunit and a small pyruvoyl-containing alpha subunit. Pyruvate serves as cofactor. Post-translationally, is synthesized initially as an inactive proenzyme. Formation of the active enzyme involves a self-maturation process in which the active site pyruvoyl group is generated from an internal serine residue via an autocatalytic post-translational modification. Two non-identical subunits are generated from the proenzyme in this reaction, and the pyruvate is formed at the N-terminus of the alpha chain, which is derived from the carboxyl end of the proenzyme. The post-translation cleavage follows an unusual pathway, termed non-hydrolytic serinolysis, in which the side chain hydroxyl group of the serine supplies its oxygen atom to form the C-terminus of the beta chain, while the remainder of the serine residue undergoes an oxidative deamination to produce ammonia and the pyruvoyl prosthetic group on the alpha chain.

The protein resides in the cell membrane. It carries out the reaction a 1,2-diacyl-sn-glycero-3-phospho-L-serine + H(+) = a 1,2-diacyl-sn-glycero-3-phosphoethanolamine + CO2. It participates in phospholipid metabolism; phosphatidylethanolamine biosynthesis; phosphatidylethanolamine from CDP-diacylglycerol: step 2/2. In terms of biological role, catalyzes the formation of phosphatidylethanolamine (PtdEtn) from phosphatidylserine (PtdSer). This chain is Phosphatidylserine decarboxylase proenzyme, found in Pelagibacter ubique (strain HTCC1062).